A 413-amino-acid polypeptide reads, in one-letter code: Envelope glycoprotein M (413 aa).

The Intravirion segment spans residues 1 to 19; the sequence is MGNYYYGGQESRLERISWR. Residues 20 to 40 traverse the membrane as a helical segment; it reads MWMVEAACYIVLVLLTLVSSF. The Virion surface segment spans residues 41 to 88; sequence ASLSSTTGFPCFVGTVGESSFGGDLMGHGMTPARRDGVKIFFMSSPST. A helical transmembrane segment spans residues 89–109; the sequence is LFVVFSAVFVWLVVAVYLLLG. Over 110 to 133 the chain is Intravirion; it reads GVRVKMCNFDSSYGASELSSAVAT. Residues 134 to 154 form a helical membrane-spanning segment; the sequence is MTSLVTLSITAWAWQVFVLML. At 155–160 the chain is on the virion surface side; that stretch reads SYRQLT. Residues 161 to 181 form a helical membrane-spanning segment; sequence LAAVAFVGIFIAGLVFMLSFA. Residues 182 to 218 are Intravirion-facing; sequence SGGKSPENYATFNSQLKTVCKDVHAVITAFKAVVLNL. The chain crosses the membrane as a helical span at residues 219–239; sequence FCVVFGVWHLMLVMLGAVIMV. Residues 240–251 are Virion surface-facing; it reads LNFGVSIPKATT. The chain crosses the membrane as a helical span at residues 252–272; that stretch reads GALVVFIVLGLVYLMMIELVV. The Intravirion segment spans residues 273 to 277; it reads SRYVH. A helical transmembrane segment spans residues 278–298; the sequence is VLLGPHLGMIIALGIAGTSAL. Residues 299–312 are Virion surface-facing; it reads SYAETLDEIMYASW. A helical membrane pass occupies residues 313–333; that stretch reads KPVAAGILGAFSVIVLALAVL. Topologically, residues 334-413 are intravirion; it reads RAVRSYKFHK…EDVIYENMKY (80 aa).

The protein belongs to the herpesviridae glycoprotein M family. Interacts (via N-terminus) with gN (via N-terminus). The gM-gN heterodimer forms the gCII complex.

It is found in the virion membrane. It localises to the host Golgi apparatus. The protein localises to the host trans-Golgi network. The protein resides in the host endosome membrane. Its subcellular location is the host nucleus inner membrane. Functionally, envelope glycoprotein important for virion assembly and egress. Plays a role in the correct incorporation of gH-gL into virion membrane. Directs the glycoprotein N (gN) to the host trans-Golgi network. This chain is Envelope glycoprotein M, found in Psittacid herpesvirus 1 (isolate Amazon parrot/-/97-0001/1997) (PsHV-1).